We begin with the raw amino-acid sequence, 142 residues long: Large ribosomal subunit protein uL13 (142 aa).

This sequence belongs to the universal ribosomal protein uL13 family. As to quaternary structure, part of the 50S ribosomal subunit.

Its function is as follows. This protein is one of the early assembly proteins of the 50S ribosomal subunit, although it is not seen to bind rRNA by itself. It is important during the early stages of 50S assembly. The chain is Large ribosomal subunit protein uL13 from Citrobacter koseri (strain ATCC BAA-895 / CDC 4225-83 / SGSC4696).